We begin with the raw amino-acid sequence, 236 residues long: Methylosome subunit pICln (236 aa).

The residue at position 2 (serine 2) is an N-acetylserine. The segment at 88–109 is disordered; that stretch reads EESKEPPSDEDEEDNDDIEPIS. Phosphoserine is present on residues serine 95, serine 143, serine 192, serine 194, serine 197, and serine 209. The segment covering 95–107 has biased composition (acidic residues); that stretch reads SDEDEEDNDDIEP. Position 222 is a phosphothreonine (threonine 222).

The protein belongs to the pICln (TC 1.A.47) family. Component of the methylosome, a 20S complex containing at least PRMT5/SKB1, WDR77/MEP50 and CLNS1A/pICln. May mediate SNRPD1 and SNRPD3 methylation. Forms a 6S pICln-Sm complex composed of CLNS1A/pICln, SNRPD1, SNRPD2, SNRPE, SNRPF and SNRPG; ring-like structure where CLNS1A/pICln mimics additional Sm proteins and which is unable to assemble into the core snRNP. Interacts with LSM10 and LSM11.

The protein localises to the cytoplasm. It is found in the cytosol. It localises to the nucleus. Its subcellular location is the cytoskeleton. Involved in both the assembly of spliceosomal snRNPs and the methylation of Sm proteins. Chaperone that regulates the assembly of spliceosomal U1, U2, U4 and U5 small nuclear ribonucleoproteins (snRNPs), the building blocks of the spliceosome, and thereby plays an important role in the splicing of cellular pre-mRNAs. Most spliceosomal snRNPs contain a common set of Sm proteins SNRPB, SNRPD1, SNRPD2, SNRPD3, SNRPE, SNRPF and SNRPG that assemble in a heptameric protein ring on the Sm site of the small nuclear RNA to form the core snRNP (Sm core). In the cytosol, the Sm proteins SNRPD1, SNRPD2, SNRPE, SNRPF and SNRPG are trapped in an inactive 6S pICln-Sm complex by the chaperone CLNS1A that controls the assembly of the core snRNP. Dissociation by the SMN complex of CLNS1A from the trapped Sm proteins and their transfer to an SMN-Sm complex triggers the assembly of core snRNPs and their transport to the nucleus. The polypeptide is Methylosome subunit pICln (Clns1a) (Mus musculus (Mouse)).